A 123-amino-acid polypeptide reads, in one-letter code: Large ribosomal subunit protein uL29 (123 aa).

Belongs to the universal ribosomal protein uL29 family. In terms of assembly, component of the large ribosomal subunit.

It is found in the cytoplasm. In terms of biological role, component of the large ribosomal subunit. The ribosome is a large ribonucleoprotein complex responsible for the synthesis of proteins in the cell. The chain is Large ribosomal subunit protein uL29 (rpl35) from Platichthys flesus (European flounder).